The chain runs to 734 residues: Cleavage stimulation factor subunit 77 (734 aa).

12 HAT repeats span residues 20 to 52 (SPIAQATPIYEQLLSLYPTSARFWKQYVEAQMA), 54 to 85 (NNDDATKQIFSRCLLTCLQVPLWQCYIRFIRK), 93 to 128 (EGQEETTKAFEFMLNYIGTDIASGPIWTEYIAFLKS), 139 to 172 (HRKTALRKVYHRAILTPTHHVEQLWKDYENFENT), 198 to 237 (ERKKYIEEIDWNMLAVPPTGTSKEETQWVAWKKFLSFEKG), 246 to 278 (SSTKRIIYAYEQCLMCLYHYPDVWYDYAEWHVK), 280 to 312 (GSTDAAIKVFQRALKAIPDSEMLKYAFAEMEES), 314 to 345 (GAIQSAKKLYENILGASTNSLAHIQYLRFLRR), 347 to 379 (EGVEAARKYFLDARKSPSCTYHVYIAFATMAFC), 382 to 414 (KEPKVAHNIFEEGLKLYMSEPVYILKYADFLTR), 416 to 450 (NDDRNIRALFERALSTLPVEDSAEVWKRFIQFEQT), and 474 to 505 (EGSSPPESSLQDVVSRYSYMDLWPCTSNDLDH). The interval 637-734 (VKQSFAAKGN…FSGELSGSTG (98 aa)) is disordered. Basic and acidic residues predominate over residues 664–677 (LPRDRRATKRKDSD). The span at 709–734 (ATSSQTPTGSTSYGSAFSGELSGSTG) shows a compositional bias: polar residues.

In terms of assembly, homodimer. Belongs to the CSTF complex. Forms a complex with cleavage and polyadenylation specificity factor (CPSF) subunits CPSF30, CSTF64, PCFS1, PCFS5 and FIPS5.

It is found in the nucleus. In terms of biological role, one of the multiple factors required for polyadenylation and 3'-end cleavage of pre-mRNAs. Required for the targeted 3' processing of antisense transcripts that triggers transcriptional silencing of the corresponding sense gene. This Arabidopsis thaliana (Mouse-ear cress) protein is Cleavage stimulation factor subunit 77.